Reading from the N-terminus, the 150-residue chain is Cytochrome c oxidase subunit 5A, mitochondrial (150 aa).

Residues 1 to 41 constitute a mitochondrion transit peptide; that stretch reads MLGAALRRCAVAATTRAGPRGLLHSARTPGPAAAIQSVRCX. The SIFI-degron signature appears at 2 to 17; the sequence is LGAALRRCAVAATTRA. 2 positions are modified to N6-acetyllysine: K87 and K113. T141 is subject to Phosphothreonine.

This sequence belongs to the cytochrome c oxidase subunit 5A family. In terms of assembly, component of the cytochrome c oxidase (complex IV, CIV), a multisubunit enzyme composed of 14 subunits. The complex is composed of a catalytic core of 3 subunits MT-CO1, MT-CO2 and MT-CO3, encoded in the mitochondrial DNA, and 11 supernumerary subunits COX4I, COX5A, COX5B, COX6A, COX6B, COX6C, COX7A, COX7B, COX7C, COX8 and NDUFA4, which are encoded in the nuclear genome. The complex exists as a monomer or a dimer and forms supercomplexes (SCs) in the inner mitochondrial membrane with NADH-ubiquinone oxidoreductase (complex I, CI) and ubiquinol-cytochrome c oxidoreductase (cytochrome b-c1 complex, complex III, CIII), resulting in different assemblies (supercomplex SCI(1)III(2)IV(1) and megacomplex MCI(2)III(2)IV(2)). Interacts with AFG1L. Interacts with RAB5IF. In response to mitochondrial stress, the precursor protein is ubiquitinated by the SIFI complex in the cytoplasm before mitochondrial import, leading to its degradation. Within the SIFI complex, UBR4 initiates ubiquitin chain that are further elongated or branched by KCMF1.

It localises to the mitochondrion inner membrane. Its pathway is energy metabolism; oxidative phosphorylation. Component of the cytochrome c oxidase, the last enzyme in the mitochondrial electron transport chain which drives oxidative phosphorylation. The respiratory chain contains 3 multisubunit complexes succinate dehydrogenase (complex II, CII), ubiquinol-cytochrome c oxidoreductase (cytochrome b-c1 complex, complex III, CIII) and cytochrome c oxidase (complex IV, CIV), that cooperate to transfer electrons derived from NADH and succinate to molecular oxygen, creating an electrochemical gradient over the inner membrane that drives transmembrane transport and the ATP synthase. Cytochrome c oxidase is the component of the respiratory chain that catalyzes the reduction of oxygen to water. Electrons originating from reduced cytochrome c in the intermembrane space (IMS) are transferred via the dinuclear copper A center (CU(A)) of subunit 2 and heme A of subunit 1 to the active site in subunit 1, a binuclear center (BNC) formed by heme A3 and copper B (CU(B)). The BNC reduces molecular oxygen to 2 water molecules using 4 electrons from cytochrome c in the IMS and 4 protons from the mitochondrial matrix. The chain is Cytochrome c oxidase subunit 5A, mitochondrial (COX5A) from Pan paniscus (Pygmy chimpanzee).